The chain runs to 350 residues: 3-methylornithine synthase (350 aa).

Positions 57–279 constitute a Radical SAM core domain; it reads NRVFLNCFIY…PKRLIPASLD (223 aa). Residues Cys71 and Cys75 each contribute to the [4Fe-4S] cluster site. Position 77 (Phe77) interacts with S-adenosyl-L-methionine. [4Fe-4S] cluster is bound at residue Cys78. Positions 112, 146, and 169 each coordinate (3R)-3-methyl-D-ornithine. The S-adenosyl-L-methionine site is built by Glu171, Arg182, and Arg190. Arg235 contributes to the (3R)-3-methyl-D-ornithine binding site. Residues Leu240 and Gln242 each coordinate S-adenosyl-L-methionine. The (3R)-3-methyl-D-ornithine site is built by Ser277, Thr298, and Ser299.

This sequence belongs to the radical SAM superfamily. PylB family. [4Fe-4S] cluster serves as cofactor. It depends on S-adenosyl-L-methionine as a cofactor.

It carries out the reaction L-lysine = (3R)-3-methyl-D-ornithine. It participates in amino-acid biosynthesis; L-pyrrolysine biosynthesis. Functionally, catalyzes the isomerization of L-lysine to (3R)-3-methyl-D-ornithine via a radical-based mechanism, a step in the biosynthesis pathway of pyrrolysine. Also catalyzes the reverse reaction in vitro, converting (3R)-3-methyl-D-ornithine into L-lysine. The polypeptide is 3-methylornithine synthase (Methanosarcina barkeri (strain Fusaro / DSM 804)).